A 1405-amino-acid chain; its full sequence is DNA-directed RNA polymerase subunit beta' (1405 aa).

Residues Cys70, Cys72, Cys85, and Cys88 each coordinate Zn(2+). Mg(2+) contacts are provided by Asp460, Asp462, and Asp464. Zn(2+) is bound by residues Cys815, Cys890, Cys897, and Cys900.

The protein belongs to the RNA polymerase beta' chain family. As to quaternary structure, the RNAP catalytic core consists of 2 alpha, 1 beta, 1 beta' and 1 omega subunit. When a sigma factor is associated with the core the holoenzyme is formed, which can initiate transcription. The cofactor is Mg(2+). It depends on Zn(2+) as a cofactor.

It carries out the reaction RNA(n) + a ribonucleoside 5'-triphosphate = RNA(n+1) + diphosphate. Functionally, DNA-dependent RNA polymerase catalyzes the transcription of DNA into RNA using the four ribonucleoside triphosphates as substrates. The sequence is that of DNA-directed RNA polymerase subunit beta' from Xanthomonas campestris pv. campestris (strain B100).